Consider the following 238-residue polypeptide: uncharacterized protein (238 aa).

It belongs to the mimivirus L74/L77/R857 family.

This is an uncharacterized protein from Acanthamoeba polyphaga mimivirus (APMV).